A 231-amino-acid polypeptide reads, in one-letter code: Orotidine 5'-phosphate decarboxylase (231 aa).

Substrate-binding positions include D12, K34, 61 to 70 (DMKLLDIDNT), T116, R177, Q186, G206, and R207. K63 functions as the Proton donor in the catalytic mechanism.

The protein belongs to the OMP decarboxylase family. Type 1 subfamily. In terms of assembly, homodimer.

The enzyme catalyses orotidine 5'-phosphate + H(+) = UMP + CO2. It participates in pyrimidine metabolism; UMP biosynthesis via de novo pathway; UMP from orotate: step 2/2. Catalyzes the decarboxylation of orotidine 5'-monophosphate (OMP) to uridine 5'-monophosphate (UMP). This chain is Orotidine 5'-phosphate decarboxylase, found in Allorhizobium ampelinum (strain ATCC BAA-846 / DSM 112012 / S4) (Agrobacterium vitis (strain S4)).